A 334-amino-acid chain; its full sequence is Atypical chemokine receptor 1 (334 aa).

The Extracellular portion of the chain corresponds to 1-61 (MGNCLYPVET…CNLLDRSSLP (61 aa)). Asn16, Asn26, and Asn32 each carry an N-linked (GlcNAc...) asparagine glycan. 2 disulfides stabilise this stretch: Cys49-Cys274 and Cys127-Cys193. Residues 62–82 (FFMLTSVLGMLASGSILFAIL) form a helical membrane-spanning segment. Residues 83 to 93 (RPFFHWQICPS) are Cytoplasmic-facing. Residues 94–114 (WPILAELAVGSALFSIAVPIL) form a helical membrane-spanning segment. Residues 115 to 127 (APGLHSAHSTALC) are Extracellular-facing. Residues 128–151 (NLGYWVWYTSAFAQALLIGCYACL) form a helical membrane-spanning segment. The Cytoplasmic segment spans residues 152–164 (NPRLNIGQLRGFT). Residues 165-185 (LGLSVGLWGAAALSGLPVALA) form a helical membrane-spanning segment. Residues 186-205 (SDVYNGFCTFPSSRDMEALK) are Extracellular-facing. A helical membrane pass occupies residues 206–226 (YTHYAICFTIFTVLPLTLLAA). The Cytoplasmic portion of the chain corresponds to 227 to 242 (KGLKIALSKGPGPWVS). Residues 243 to 263 (VLWIWFIFWWPHGMVLIFDAL) traverse the membrane as a helical segment. The Extracellular portion of the chain corresponds to 264–285 (VRSKTVLLYTCQSQKILDAMLN). Asn285 carries an N-linked (GlcNAc...) asparagine glycan. A helical membrane pass occupies residues 286-306 (VTEALSMLHCVATPLLLALFC). Residues 307–334 (HQTTRRSLSSLSLPTRQASQMDALAGKS) are Cytoplasmic-facing.

This sequence belongs to the G-protein coupled receptor 1 family. Atypical chemokine receptor subfamily. As to expression, expressed in liver and brain.

The protein resides in the early endosome. The protein localises to the recycling endosome. Its subcellular location is the membrane. In terms of biological role, atypical chemokine receptor that controls chemokine levels and localization via high-affinity chemokine binding that is uncoupled from classic ligand-driven signal transduction cascades, resulting instead in chemokine sequestration, degradation, or transcytosis. Also known as interceptor (internalizing receptor) or chemokine-scavenging receptor or chemokine decoy receptor. Has a promiscuous chemokine-binding profile, interacting with inflammatory chemokines of both the CXC and the CC subfamilies but not with homeostatic chemokines. Acts as a receptor for chemokines including CCL2, CCL5, CCL7, CCL11, CCL13, CCL14, CCL17, CXCL5, CXCL6, IL8/CXCL8, CXCL11, GRO, RANTES, MCP-1 and TARC. May regulate chemokine bioavailability and, consequently, leukocyte recruitment through two distinct mechanisms: when expressed in endothelial cells, it sustains the abluminal to luminal transcytosis of tissue-derived chemokines and their subsequent presentation to circulating leukocytes; when expressed in erythrocytes, serves as blood reservoir of cognate chemokines but also as a chemokine sink, buffering potential surges in plasma chemokine levels. Functionally, (Microbial infection) Acts as a receptor for the malaria parasite Plasmodium yoelii in mature erythrocytes but not reticulocytes. In Mus musculus (Mouse), this protein is Atypical chemokine receptor 1 (Ackr1).